Here is a 647-residue protein sequence, read N- to C-terminus: Serine/threonine-protein kinase PLK3 (647 aa).

The tract at residues 1–56 (MEPAAGFLSPRPFPRAAAPSSPPAGPGPPASASPRSEPGVLAGPQTPDASRLITDP) is disordered. Residues 20-31 (SSPPAGPGPPAS) show a composition bias toward pro residues. In terms of domain architecture, Protein kinase spans 62-314 (YIKGRLLGKG…IEQILRHDFF (253 aa)). ATP-binding positions include 68–76 (LGKGGFARC) and lysine 91. Aspartate 185 acts as the Proton acceptor in catalysis. POLO box domains are found at residues 464-542 (WVSK…YMEQ) and 563-646 (LLLQ…DRSP).

It belongs to the protein kinase superfamily. Ser/Thr protein kinase family. CDC5/Polo subfamily. In terms of assembly, interacts with GOLGB1. Interacts (via the POLO-box domain) with CIB1; leading to inhibit PLK3 kinase activity. Post-translationally, phosphorylated in an ATM-dependent manner following DNA damage. Phosphorylated as cells enter mitosis and dephosphorylated as cells exit mitosis. Constitutively expressed in post-mitotic neurons.

The protein localises to the cell projection. The protein resides in the dendrite. Its subcellular location is the cytoplasm. It localises to the nucleus. It is found in the nucleolus. The protein localises to the golgi apparatus. The protein resides in the cytoskeleton. Its subcellular location is the microtubule organizing center. It localises to the centrosome. It carries out the reaction L-seryl-[protein] + ATP = O-phospho-L-seryl-[protein] + ADP + H(+). It catalyses the reaction L-threonyl-[protein] + ATP = O-phospho-L-threonyl-[protein] + ADP + H(+). Serine/threonine-protein kinase involved in cell cycle regulation, response to stress and Golgi disassembly. Polo-like kinases act by binding and phosphorylating proteins that are already phosphorylated on a specific motif recognized by the POLO box domains. Phosphorylates ATF2, BCL2L1, CDC25A, CDC25C, CHEK2, HIF1A, JUN, p53/TP53, p73/TP73, PTEN, TOP2A and VRK1. Involved in cell cycle regulation: required for entry into S phase and cytokinesis. Phosphorylates BCL2L1, leading to regulate the G2 checkpoint and progression to cytokinesis during mitosis. Plays a key role in response to stress: rapidly activated upon stress stimulation, such as ionizing radiation, reactive oxygen species (ROS), hyperosmotic stress, UV irradiation and hypoxia. Involved in DNA damage response and G1/S transition checkpoint by phosphorylating CDC25A, p53/TP53 and p73/TP73. Phosphorylates p53/TP53 in response to reactive oxygen species (ROS), thereby promoting p53/TP53-mediated apoptosis. Phosphorylates CHEK2 in response to DNA damage, promoting the G2/M transition checkpoint. Phosphorylates the transcription factor p73/TP73 in response to DNA damage, leading to inhibit p73/TP73-mediated transcriptional activation and pro-apoptotic functions. Phosphorylates HIF1A and JUN is response to hypoxia. Phosphorylates ATF2 following hyperosmotic stress in corneal epithelium. Also involved in Golgi disassembly during the cell cycle: part of a MEK1/MAP2K1-dependent pathway that induces Golgi fragmentation during mitosis by mediating phosphorylation of VRK1. May participate in endomitotic cell cycle, a form of mitosis in which both karyokinesis and cytokinesis are interrupted and is a hallmark of megakaryocyte differentiation, via its interaction with CIB1. The chain is Serine/threonine-protein kinase PLK3 (Plk3) from Rattus norvegicus (Rat).